The sequence spans 303 residues: Acetylglutamate kinase (303 aa).

Residues 69–70 (GG), Arg91, and Asn190 each bind substrate.

Belongs to the acetylglutamate kinase family. ArgB subfamily.

The protein localises to the cytoplasm. It carries out the reaction N-acetyl-L-glutamate + ATP = N-acetyl-L-glutamyl 5-phosphate + ADP. It functions in the pathway amino-acid biosynthesis; L-arginine biosynthesis; N(2)-acetyl-L-ornithine from L-glutamate: step 2/4. In terms of biological role, catalyzes the ATP-dependent phosphorylation of N-acetyl-L-glutamate. The chain is Acetylglutamate kinase from Nocardia farcinica (strain IFM 10152).